Consider the following 255-residue polypeptide: 3-deoxy-manno-octulosonate cytidylyltransferase (255 aa).

It belongs to the KdsB family.

The protein localises to the cytoplasm. It carries out the reaction 3-deoxy-alpha-D-manno-oct-2-ulosonate + CTP = CMP-3-deoxy-beta-D-manno-octulosonate + diphosphate. It participates in nucleotide-sugar biosynthesis; CMP-3-deoxy-D-manno-octulosonate biosynthesis; CMP-3-deoxy-D-manno-octulosonate from 3-deoxy-D-manno-octulosonate and CTP: step 1/1. Its pathway is bacterial outer membrane biogenesis; lipopolysaccharide biosynthesis. Functionally, activates KDO (a required 8-carbon sugar) for incorporation into bacterial lipopolysaccharide in Gram-negative bacteria. The sequence is that of 3-deoxy-manno-octulosonate cytidylyltransferase from Polaromonas sp. (strain JS666 / ATCC BAA-500).